A 224-amino-acid polypeptide reads, in one-letter code: Proteasome subunit beta (224 aa).

Residues 1 to 6 (MDVMKG) constitute a propeptide, removed in mature form; by autocatalysis. Threonine 7 (nucleophile) is an active-site residue.

Belongs to the peptidase T1B family. The 20S proteasome core is composed of 14 alpha and 14 beta subunits that assemble into four stacked heptameric rings, resulting in a barrel-shaped structure. The two inner rings, each composed of seven catalytic beta subunits, are sandwiched by two outer rings, each composed of seven alpha subunits. The catalytic chamber with the active sites is on the inside of the barrel. Has a gated structure, the ends of the cylinder being occluded by the N-termini of the alpha-subunits. Is capped at one or both ends by the proteasome regulatory ATPase, PAN.

It localises to the cytoplasm. It carries out the reaction Cleavage of peptide bonds with very broad specificity.. The formation of the proteasomal ATPase PAN-20S proteasome complex, via the docking of the C-termini of PAN into the intersubunit pockets in the alpha-rings, triggers opening of the gate for substrate entry. Interconversion between the open-gate and close-gate conformations leads to a dynamic regulation of the 20S proteasome proteolysis activity. Component of the proteasome core, a large protease complex with broad specificity involved in protein degradation. This is Proteasome subunit beta from Methanocaldococcus sp. (strain FS406-22).